The primary structure comprises 335 residues: Putative type I specificity subunit S.MpnORF89P (335 aa).

It belongs to the type-I restriction system S methylase family. In terms of assembly, the methyltransferase is composed of M and S polypeptides.

Its function is as follows. The specificity (S) subunit of a type I methyltransferase (MTase); this subunit dictates DNA sequence specificity. The single R subunit has multiple frameshifts and is probably not expressed. The sequence is that of Putative type I specificity subunit S.MpnORF89P from Mycoplasma pneumoniae (strain ATCC 29342 / M129 / Subtype 1) (Mycoplasmoides pneumoniae).